Consider the following 144-residue polypeptide: Urease subunit beta (144 aa).

The protein belongs to the urease beta subunit family. As to quaternary structure, heterotrimer of UreA (gamma), UreB (beta) and UreC (alpha) subunits. Three heterotrimers associate to form the active enzyme.

The protein localises to the cytoplasm. It catalyses the reaction urea + 2 H2O + H(+) = hydrogencarbonate + 2 NH4(+). It participates in nitrogen metabolism; urea degradation; CO(2) and NH(3) from urea (urease route): step 1/1. This is Urease subunit beta from Yersinia pseudotuberculosis serotype O:1b (strain IP 31758).